Reading from the N-terminus, the 294-residue chain is 4-hydroxy-tetrahydrodipicolinate synthase (294 aa).

Threonine 45 provides a ligand contact to pyruvate. The active-site Proton donor/acceptor is the tyrosine 133. Lysine 161 functions as the Schiff-base intermediate with substrate in the catalytic mechanism. Isoleucine 203 provides a ligand contact to pyruvate.

The protein belongs to the DapA family. As to quaternary structure, homotetramer; dimer of dimers.

It is found in the cytoplasm. It catalyses the reaction L-aspartate 4-semialdehyde + pyruvate = (2S,4S)-4-hydroxy-2,3,4,5-tetrahydrodipicolinate + H2O + H(+). Its pathway is amino-acid biosynthesis; L-lysine biosynthesis via DAP pathway; (S)-tetrahydrodipicolinate from L-aspartate: step 3/4. Functionally, catalyzes the condensation of (S)-aspartate-beta-semialdehyde [(S)-ASA] and pyruvate to 4-hydroxy-tetrahydrodipicolinate (HTPA). In Alcanivorax borkumensis (strain ATCC 700651 / DSM 11573 / NCIMB 13689 / SK2), this protein is 4-hydroxy-tetrahydrodipicolinate synthase.